The chain runs to 329 residues: MVKTQRVVITPGEPAGIGPDLVVQLAQREWPVELVVCADATLLTNRAAMLGLPLTLRPYSPNSPAQPQTAGTLTLLPVALRAPVTAGQLAVENGHYVVETLARACDGCLNGEFAALITGPVHKGVINDAGIPFTGHTEFFEERSQAKKVVMMLATEELRVALATTHLPLRDIADAITPALLHEVIAILHHDLRTKFGIAEPRILVCGLNPHAGEGGHMGTEEIDTIIPVLNELRAQGMKLNGPLPADTLFQPKYLDNADAVLAMYHDQGLPVLKYQGFGRGVNITLGLPFIRTSVDHGTALELAGRGKADVGSFITALNLAIKMIVNTQ.

Positions 136 and 137 each coordinate substrate. His166, His211, and His266 together coordinate a divalent metal cation. Residues Lys274, Asn283, and Arg292 each contribute to the substrate site.

This sequence belongs to the PdxA family. Homodimer. Zn(2+) is required as a cofactor. It depends on Mg(2+) as a cofactor. The cofactor is Co(2+).

It localises to the cytoplasm. It carries out the reaction 4-(phosphooxy)-L-threonine + NAD(+) = 3-amino-2-oxopropyl phosphate + CO2 + NADH. It participates in cofactor biosynthesis; pyridoxine 5'-phosphate biosynthesis; pyridoxine 5'-phosphate from D-erythrose 4-phosphate: step 4/5. In terms of biological role, catalyzes the NAD(P)-dependent oxidation of 4-(phosphooxy)-L-threonine (HTP) into 2-amino-3-oxo-4-(phosphooxy)butyric acid which spontaneously decarboxylates to form 3-amino-2-oxopropyl phosphate (AHAP). The protein is 4-hydroxythreonine-4-phosphate dehydrogenase of Escherichia coli (strain K12 / MC4100 / BW2952).